The primary structure comprises 431 residues: Glycerol-3-phosphate dehydrogenase [NAD(P)+] (431 aa).

A compositionally biased stretch (polar residues) spans methionine 1–glutamate 19. The interval methionine 1–lysine 25 is disordered. The NADPH site is built by serine 79, phenylalanine 80, arginine 100, and lysine 173. Sn-glycerol 3-phosphate-binding residues include lysine 173 and glycine 201. Residue alanine 205 coordinates NADPH. Sn-glycerol 3-phosphate is bound by residues lysine 256, aspartate 309, serine 319, arginine 320, and asparagine 321. Residue lysine 256 is the Proton acceptor of the active site. Residue arginine 320 participates in NADPH binding. Glutamate 346 contacts NADPH.

The protein belongs to the NAD-dependent glycerol-3-phosphate dehydrogenase family.

It is found in the cytoplasm. The enzyme catalyses sn-glycerol 3-phosphate + NAD(+) = dihydroxyacetone phosphate + NADH + H(+). It carries out the reaction sn-glycerol 3-phosphate + NADP(+) = dihydroxyacetone phosphate + NADPH + H(+). It participates in membrane lipid metabolism; glycerophospholipid metabolism. Functionally, catalyzes the reduction of the glycolytic intermediate dihydroxyacetone phosphate (DHAP) to sn-glycerol 3-phosphate (G3P), the key precursor for phospholipid synthesis. This Psychrobacter arcticus (strain DSM 17307 / VKM B-2377 / 273-4) protein is Glycerol-3-phosphate dehydrogenase [NAD(P)+].